Reading from the N-terminus, the 275-residue chain is Adenosylcobinamide-GDP ribazoletransferase (275 aa).

Helical transmembrane passes span Trp53–Leu73, Val113–Ser133, Leu144–Val164, Phe204–Leu224, Leu225–Ile245, and Leu253–Ile273.

This sequence belongs to the CobS family. The cofactor is Mg(2+).

The protein resides in the cell inner membrane. The enzyme catalyses alpha-ribazole + adenosylcob(III)inamide-GDP = adenosylcob(III)alamin + GMP + H(+). The catalysed reaction is alpha-ribazole 5'-phosphate + adenosylcob(III)inamide-GDP = adenosylcob(III)alamin 5'-phosphate + GMP + H(+). Its pathway is cofactor biosynthesis; adenosylcobalamin biosynthesis; adenosylcobalamin from cob(II)yrinate a,c-diamide: step 7/7. Functionally, joins adenosylcobinamide-GDP and alpha-ribazole to generate adenosylcobalamin (Ado-cobalamin). Also synthesizes adenosylcobalamin 5'-phosphate from adenosylcobinamide-GDP and alpha-ribazole 5'-phosphate. This chain is Adenosylcobinamide-GDP ribazoletransferase, found in Leptospira biflexa serovar Patoc (strain Patoc 1 / Ames).